Here is a 1811-residue protein sequence, read N- to C-terminus: ADP-ribosylation factor guanine nucleotide-exchange factor sec71 (1811 aa).

Disordered stretches follow at residues 1-108 and 316-336; these read MTDL…TSEA and INMNKSSSNGTPDRANSPIPS. Basic and acidic residues-rich tracts occupy residues 33-49, 57-73, and 80-91; these read STIKSRVSDEIDEHDSI, KSIEINDKNLEAEKDIE, and PPEDDLDSRSIE. At Ser-40 the chain carries Phosphoserine. Polar residues-rich tracts occupy residues 92–108 and 316–326; these read SEQTGTLSKQTTSTSEA and INMNKSSSNGT. A Phosphothreonine modification is found at Thr-326. Residues Ser-332 and Ser-353 each carry the phosphoserine modification. The HUS box signature appears at 533–537; sequence NYDCI. A compositionally biased stretch (basic and acidic residues) spans 643-663; the sequence is TAKDDETESTSKGEEPQKSKS. The interval 643–688 is disordered; that stretch reads TAKDDETESTSKGEEPQKSKSEPPSAGINSTSMDNLESSGQALATD. Polar residues predominate over residues 669–688; sequence GINSTSMDNLESSGQALATD. One can recognise an SEC7 domain in the interval 692–880; the sequence is QFENLKHRKK…TEVYEEIQKN (189 aa). Residue Ser-741 is modified to Phosphoserine. Thr-742 carries the post-translational modification Phosphothreonine. Position 812 (Asp-812) interacts with Mg(2+). An HDS1 domain region spans residues 889–1103; that stretch reads DPTSNFPEIP…TTKPLRKSLD (215 aa).

The protein resides in the cytoplasm. It is found in the golgi apparatus. The protein localises to the trans-Golgi network. Its subcellular location is the cytoplasmic vesicle. It localises to the COPI-coated vesicle membrane. The protein resides in the COPII-coated vesicle membrane. In terms of biological role, guanine exchange factor that acts as an activator of arf1 at the trans-Golgi net-work and is thus involved in vesicular budding and traffic between compartments of the Golgi apparatus. Activation of Arf (ADP-ribosylation factor) GTPases is essential for vesicle formation via recruitment of cargo adapters and coat proteins necessary for Golgi trafficking. Involved in tunicamycin-induced ER stress response and subsequent apoptosis. In Schizosaccharomyces pombe (strain 972 / ATCC 24843) (Fission yeast), this protein is ADP-ribosylation factor guanine nucleotide-exchange factor sec71.